Here is a 264-residue protein sequence, read N- to C-terminus: 3-methyl-2-oxobutanoate hydroxymethyltransferase (264 aa).

The Mg(2+) site is built by aspartate 45 and aspartate 84. 3-methyl-2-oxobutanoate-binding positions include 45 to 46 (DS), aspartate 84, and lysine 112. Residue glutamate 114 participates in Mg(2+) binding. The active-site Proton acceptor is glutamate 181.

Belongs to the PanB family. As to quaternary structure, homodecamer; pentamer of dimers. Mg(2+) is required as a cofactor.

It localises to the cytoplasm. It carries out the reaction 3-methyl-2-oxobutanoate + (6R)-5,10-methylene-5,6,7,8-tetrahydrofolate + H2O = 2-dehydropantoate + (6S)-5,6,7,8-tetrahydrofolate. Its pathway is cofactor biosynthesis; (R)-pantothenate biosynthesis; (R)-pantoate from 3-methyl-2-oxobutanoate: step 1/2. Catalyzes the reversible reaction in which hydroxymethyl group from 5,10-methylenetetrahydrofolate is transferred onto alpha-ketoisovalerate to form ketopantoate. In Shewanella sp. (strain MR-4), this protein is 3-methyl-2-oxobutanoate hydroxymethyltransferase.